We begin with the raw amino-acid sequence, 122 residues long: uncharacterized protein (122 aa).

2 helical membrane passes run 43–63 (PIII…IFFI) and 76–96 (AVAD…ILYF).

Its subcellular location is the membrane. This is an uncharacterized protein from Schizosaccharomyces pombe (strain 972 / ATCC 24843) (Fission yeast).